A 612-amino-acid polypeptide reads, in one-letter code: Peroxisomal carnitine O-octanoyltransferase (612 aa).

Methionine 1 is subject to N-acetylmethionine. An N6-succinyllysine mark is found at lysine 40 and lysine 57. Histidine 327 (proton acceptor) is an active-site residue. Residues lysine 406 and 410–417 (KKEALHPD) contribute to the CoA site. Lysine 406 is subject to N6-acetyllysine; alternate. At lysine 406 the chain carries N6-succinyllysine; alternate. (R)-carnitine-binding residues include tyrosine 439, threonine 441, and threonine 452. Residues 610 to 612 (AHL) carry the Microbody targeting signal motif.

It belongs to the carnitine/choline acetyltransferase family. As to expression, liver.

The protein resides in the peroxisome. It catalyses the reaction octanoyl-CoA + (R)-carnitine = O-octanoyl-(R)-carnitine + CoA. It carries out the reaction 4,8-dimethylnonanoyl-CoA + (R)-carnitine = O-4,8-dimethylnonanoyl-(R)-carnitine + CoA. The protein operates within lipid metabolism; fatty acid beta-oxidation. In terms of biological role, beta-oxidation of fatty acids. The highest activity concerns the C6 to C10 chain length substrate. The polypeptide is Peroxisomal carnitine O-octanoyltransferase (Crot) (Rattus norvegicus (Rat)).